The primary structure comprises 403 residues: Exodeoxyribonuclease 7 large subunit (403 aa).

This sequence belongs to the XseA family. Heterooligomer composed of large and small subunits.

It localises to the cytoplasm. The enzyme catalyses Exonucleolytic cleavage in either 5'- to 3'- or 3'- to 5'-direction to yield nucleoside 5'-phosphates.. Its function is as follows. Bidirectionally degrades single-stranded DNA into large acid-insoluble oligonucleotides, which are then degraded further into small acid-soluble oligonucleotides. This chain is Exodeoxyribonuclease 7 large subunit, found in Clostridium botulinum (strain Okra / Type B1).